A 68-amino-acid polypeptide reads, in one-letter code: Lipopolysaccharide export system ATP-binding protein LptB (68 aa).

This sequence belongs to the ABC transporter superfamily. Outer membrane lipopolysaccharide export (TC 1.B.42) family. In terms of assembly, component of the lipopolysaccharide transport and assembly complex. The LptBFG transporter is composed of two ATP-binding proteins (LptB) and two transmembrane proteins (LptF and LptG).

It localises to the cytoplasm. It is found in the cell inner membrane. In terms of biological role, part of the ABC transporter complex LptBFG involved in the translocation of lipopolysaccharide (LPS) from the inner membrane to the outer membrane. Probably responsible for energy coupling to the transport system. This Klebsiella oxytoca protein is Lipopolysaccharide export system ATP-binding protein LptB (lptB).